The chain runs to 340 residues: MSSYILFGLENPLLDYYVGGETATLEKYGLKSNDAVLASESQMGIYKEPCVSYSAGGAAQNSCRAAQYVLPPNSTVFAGCVGQDKFADMLLESNEKAGLRSEFSVDPTTPTGVCAVVLSNNNKNRSLCTNLGAANNYKLKDLQQPNVWKFVEEAKVIYVGGFHLTVSPESMLCLAQHANENNKPYIMNLSAPFLSQFFKEQMDSVIPYCDYVIGNEAEILSYGENHGIKSTDVQEIALALSSVEKVNKKRTRVVVITQGADATIVAKDGKVTTYKPNRVPSEEIVDTNGAGDAFAGGFIAALSQGQGIDYAVTLGHWLGQECIKVSGTTLPLPKKQFPLP.

Residue Asp-292 is part of the active site.

Belongs to the carbohydrate kinase PfkB family. It depends on Mg(2+) as a cofactor.

The enzyme catalyses adenosine + ATP = AMP + ADP + H(+). Its pathway is purine metabolism; AMP biosynthesis via salvage pathway; AMP from adenosine: step 1/1. In Schizosaccharomyces pombe (strain 972 / ATCC 24843) (Fission yeast), this protein is Adenosine kinase (ado1).